The chain runs to 199 residues: Shikimate kinase (199 aa).

14–19 (GSGKST) provides a ligand contact to ATP. S18 contributes to the Mg(2+) binding site. Substrate contacts are provided by D36, R60, and G82. Position 120 (R120) interacts with ATP. R147 provides a ligand contact to substrate. The tract at residues 179 to 199 (YVRRAEKNQNSHSQTKKQSRK) is disordered.

The protein belongs to the shikimate kinase family. Monomer. Requires Mg(2+) as cofactor.

It localises to the cytoplasm. It carries out the reaction shikimate + ATP = 3-phosphoshikimate + ADP + H(+). It functions in the pathway metabolic intermediate biosynthesis; chorismate biosynthesis; chorismate from D-erythrose 4-phosphate and phosphoenolpyruvate: step 5/7. In terms of biological role, catalyzes the specific phosphorylation of the 3-hydroxyl group of shikimic acid using ATP as a cosubstrate. This chain is Shikimate kinase, found in Chlorobium phaeobacteroides (strain BS1).